The primary structure comprises 334 residues: Cathepsin K (334 aa).

An N-terminal signal peptide occupies residues 1-19 (MLRLHWLALLVLLLPMAAA). The propeptide at 20–119 (QLRPEPELDA…TLYVPDWSSR (100 aa)) is activation peptide. An N-linked (GlcNAc...) asparagine glycan is attached at asparagine 108. 3 disulfide bridges follow: cysteine 141–cysteine 182, cysteine 175–cysteine 215, and cysteine 274–cysteine 323. Residue cysteine 144 is part of the active site. Active-site residues include histidine 281 and asparagine 301.

It belongs to the peptidase C1 family.

It carries out the reaction Broad proteolytic activity. With small-molecule substrates and inhibitors, the major determinant of specificity is P2, which is preferably Leu, Met &gt; Phe, and not Arg.. Its function is as follows. Closely involved in osteoclastic bone resorption and may participate partially in the disorder of bone remodeling. Displays potent endoprotease activity against fibrinogen at acid pH. May play an important role in extracellular matrix degradation. This chain is Cathepsin K (CTSK), found in Gallus gallus (Chicken).